The primary structure comprises 284 residues: Shikimate dehydrogenase (NADP(+)) (284 aa).

Residues serine 20–serine 22 and serine 67 each bind shikimate. Catalysis depends on lysine 71, which acts as the Proton acceptor. Aspartate 83 provides a ligand contact to NADP(+). Residues asparagine 92 and aspartate 107 each contribute to the shikimate site. Residues glycine 129–alanine 133 and isoleucine 227 contribute to the NADP(+) site. Tyrosine 229 contacts shikimate. Glycine 250 contacts NADP(+).

The protein belongs to the shikimate dehydrogenase family. Homodimer.

The enzyme catalyses shikimate + NADP(+) = 3-dehydroshikimate + NADPH + H(+). It participates in metabolic intermediate biosynthesis; chorismate biosynthesis; chorismate from D-erythrose 4-phosphate and phosphoenolpyruvate: step 4/7. Functionally, involved in the biosynthesis of the chorismate, which leads to the biosynthesis of aromatic amino acids. Catalyzes the reversible NADPH linked reduction of 3-dehydroshikimate (DHSA) to yield shikimate (SA). The sequence is that of Shikimate dehydrogenase (NADP(+)) from Streptococcus pneumoniae (strain Taiwan19F-14).